The primary structure comprises 387 residues: Succinyl-diaminopimelate desuccinylase (387 aa).

Position 74 (His-74) interacts with Zn(2+). The active site involves Asp-76. Zn(2+) is bound at residue Asp-107. The active-site Proton acceptor is Glu-142. Zn(2+)-binding residues include Glu-143, Glu-171, and His-360.

This sequence belongs to the peptidase M20A family. DapE subfamily. As to quaternary structure, homodimer. Zn(2+) is required as a cofactor. It depends on Co(2+) as a cofactor.

It catalyses the reaction N-succinyl-(2S,6S)-2,6-diaminopimelate + H2O = (2S,6S)-2,6-diaminopimelate + succinate. It participates in amino-acid biosynthesis; L-lysine biosynthesis via DAP pathway; LL-2,6-diaminopimelate from (S)-tetrahydrodipicolinate (succinylase route): step 3/3. Functionally, catalyzes the hydrolysis of N-succinyl-L,L-diaminopimelic acid (SDAP), forming succinate and LL-2,6-diaminopimelate (DAP), an intermediate involved in the bacterial biosynthesis of lysine and meso-diaminopimelic acid, an essential component of bacterial cell walls. In Rhodopseudomonas palustris (strain ATCC BAA-98 / CGA009), this protein is Succinyl-diaminopimelate desuccinylase.